Reading from the N-terminus, the 539-residue chain is Chaperonin GroEL (539 aa).

ATP-binding positions include 29-32 (TIGP), 86-90 (DGTTT), Gly-413, 476-478 (NAA), and Asp-492.

It belongs to the chaperonin (HSP60) family. In terms of assembly, forms a cylinder of 14 subunits composed of two heptameric rings stacked back-to-back. Interacts with the co-chaperonin GroES.

The protein resides in the cytoplasm. The enzyme catalyses ATP + H2O + a folded polypeptide = ADP + phosphate + an unfolded polypeptide.. Together with its co-chaperonin GroES, plays an essential role in assisting protein folding. The GroEL-GroES system forms a nano-cage that allows encapsulation of the non-native substrate proteins and provides a physical environment optimized to promote and accelerate protein folding. This chain is Chaperonin GroEL, found in Staphylococcus epidermidis (strain ATCC 12228 / FDA PCI 1200).